The following is a 997-amino-acid chain: Translation initiation factor IF-2 (997 aa).

The tract at residues 36–415 is disordered; sequence SMAGSLTTEE…ATQPLKAAKR (380 aa). Basic and acidic residues-rich tracts occupy residues 45–65 and 94–107; these read EAAR…ERSG and AREE…EKPA. Low complexity predominate over residues 108 to 126; sequence AVEAPAQAEPVAEAPAASP. A compositionally biased stretch (basic and acidic residues) spans 127–147; sequence HKVEEKAAPEAAKAEPAEKAK. The span at 151-162 shows a compositional bias: low complexity; that stretch reads ARVVSAARVISR. Positions 163–181 are enriched in basic and acidic residues; the sequence is PGEEEEKKPEPVVESKPEP. Residues 182–196 are compositionally biased toward low complexity; the sequence is VAEISPVAAALAARE. Basic and acidic residues-rich tracts occupy residues 197–214 and 241–252; these read AAAR…EKGA and PEARTEAWKDAD. Positions 300-309 are enriched in gly residues; it reads GRPGAPGGPR. Pro residues predominate over residues 316–335; that stretch reads PPRPGGPRPSGPGGPRPAGG. Positions 378 to 388 are enriched in basic and acidic residues; sequence GGRRDDDDSQR. A compositionally biased stretch (basic residues) spans 390–399; it reads NRGKGRRKGG. The 170-residue stretch at 496–665 folds into the tr-type G domain; that stretch reads PRPPVVTIMG…ALQSEIMELK (170 aa). Residues 505 to 512 form a G1 region; that stretch reads GHVDHGKT. 505-512 contributes to the GTP binding site; it reads GHVDHGKT. Residues 530-534 form a G2 region; the sequence is GITQH. Residues 551-554 are G3; the sequence is DTPG. Residues 551–555 and 605–608 contribute to the GTP site; these read DTPGH and NKMD. The tract at residues 605–608 is G4; that stretch reads NKMD. The interval 641 to 643 is G5; it reads AAK.

It belongs to the TRAFAC class translation factor GTPase superfamily. Classic translation factor GTPase family. IF-2 subfamily.

It localises to the cytoplasm. In terms of biological role, one of the essential components for the initiation of protein synthesis. Protects formylmethionyl-tRNA from spontaneous hydrolysis and promotes its binding to the 30S ribosomal subunits. Also involved in the hydrolysis of GTP during the formation of the 70S ribosomal complex. The sequence is that of Translation initiation factor IF-2 from Desulfovibrio desulfuricans (strain ATCC 27774 / DSM 6949 / MB).